An 840-amino-acid polypeptide reads, in one-letter code: Protein translocase subunit SecA (840 aa).

Residues Gln-85, 103–107 (GEGKT), and Asp-492 contribute to the ATP site. A disordered region spans residues 787–821 (QRERVAKETGASHGGDSQEIKKKPVKKEPKVGRND). A compositionally biased stretch (basic and acidic residues) spans 802-819 (DSQEIKKKPVKKEPKVGR). Positions 823, 825, 834, and 835 each coordinate Zn(2+).

The protein belongs to the SecA family. In terms of assembly, monomer and homodimer. Part of the essential Sec protein translocation apparatus which comprises SecA, SecYEG and auxiliary proteins SecDF. Other proteins may also be involved. Requires Zn(2+) as cofactor.

The protein resides in the cell membrane. It is found in the cytoplasm. It carries out the reaction ATP + H2O + cellular proteinSide 1 = ADP + phosphate + cellular proteinSide 2.. Its function is as follows. Part of the Sec protein translocase complex. Interacts with the SecYEG preprotein conducting channel. Has a central role in coupling the hydrolysis of ATP to the transfer of proteins into and across the cell membrane, serving as an ATP-driven molecular motor driving the stepwise translocation of polypeptide chains across the membrane. The polypeptide is Protein translocase subunit SecA (Clostridium perfringens (strain SM101 / Type A)).